The primary structure comprises 305 residues: Olfactory receptor 5M11 (305 aa).

At 1–25 the chain is on the extracellular side; it reads MSNTNGSAITEFILLGLTDCPELQS. N-linked (GlcNAc...) asparagine glycosylation occurs at Asn-5. Residues 26 to 46 traverse the membrane as a helical segment; it reads LLFVLFLVVYLVTLLGNLGMI. The Cytoplasmic portion of the chain corresponds to 47-54; it reads MLMRLDSR. Residues 55–75 form a helical membrane-spanning segment; sequence LHTPMYFFLTNLAFVDLCYTS. Residues 76–98 are Extracellular-facing; that stretch reads NATPQMSTNIVSEKTISFAGCFT. Cys-96 and Cys-188 are disulfide-bonded. Residues 99–119 traverse the membrane as a helical segment; it reads QCYIFIALLLTEFYMLAAMAY. Topologically, residues 120-138 are cytoplasmic; that stretch reads DRYVAIYDPLRYSVKTSRR. Residues 139–159 traverse the membrane as a helical segment; the sequence is VCICLATFPYVYGFSDGLFQA. Over 160–195 the chain is Extracellular; that stretch reads ILTFRLTFCRSSVINHFYCADPPLIKLSCSDTYVKE. The chain crosses the membrane as a helical span at residues 196–216; that stretch reads HAMFISAGFNLSSSLTIVLVS. Residues 217 to 236 are Cytoplasmic-facing; sequence YAFILAAILRIKSAEGRHKA. The chain crosses the membrane as a helical span at residues 237-257; it reads FSTCGSHMMAVTLFYGTLFCM. Residues 258-270 are Extracellular-facing; the sequence is YIRPPTDKTVEES. A helical transmembrane segment spans residues 271-291; sequence KIIAVFYTFVSPVLNPLIYSL. At 292-305 the chain is on the cytoplasmic side; sequence RNKDVKQALKNVLR.

It belongs to the G-protein coupled receptor 1 family.

Its subcellular location is the cell membrane. Functionally, odorant receptor. In Homo sapiens (Human), this protein is Olfactory receptor 5M11 (OR5M11).